The following is a 330-amino-acid chain: 5'-AMP-activated protein kinase subunit gamma-1 (330 aa).

Residues 1–24 form a disordered region; the sequence is MEAVPSSDSYPAVENEHLQETPES. CBS domains are found at residues 43 to 103, 125 to 187, and 198 to 260; these read PTSS…KSAL, SFKP…PKPE, and IGTY…NLDV. Residues Arg-70, 85–90, Val-130, 151–152, and Lys-170 contribute to the ADP site; these read MLTITD and HR. AMP contacts are provided by residues Arg-70, 85-90, Val-130, His-151, 151-152, Lys-170, Thr-200, Ala-205, 226-227, and 242-245; these read MLTITD, HR, SA, and SKFD. ATP is bound by residues Arg-70, 85 to 90, Val-130, 151 to 152, Arg-152, and Lys-170; these read MLTITD and HR. The AMPK pseudosubstrate motif lies at 138 to 159; the sequence is LFDAVSSLIRNKIHRLPVIDPE. Residue 242-245 participates in ADP binding; it reads SKFD. 242 to 245 contributes to the ATP binding site; the sequence is SKFD. Ser-261 is modified (phosphoserine; by ULK1). A Phosphothreonine; by ULK1 modification is found at Thr-263. An ADP-binding site is contributed by Arg-269. Position 269 (Arg-269) interacts with AMP. An ATP-binding site is contributed by Arg-269. Ser-270 carries the phosphoserine; by ULK1 modification. The region spanning 272–329 is the CBS 4 domain; that stretch reads YFEGVLKCYLHETLETIINRLVEAEVHRLVVVDENDVVKGIVSLSDILQALVLTGGEK. ADP contacts are provided by residues Leu-277 and 298 to 299; that span reads HR. AMP contacts are provided by residues Leu-277, His-298, 298 to 299, and 314 to 317; these read HR and SLSD. ATP contacts are provided by residues Leu-277 and 298-299; that span reads HR.

This sequence belongs to the 5'-AMP-activated protein kinase gamma subunit family. AMPK is a heterotrimer of an alpha catalytic subunit (PRKAA1 or PRKAA2), a beta (PRKAB1 or PRKAB2) and a gamma non-catalytic subunits (PRKAG1, PRKAG2 or PRKAG3). Interacts with FNIP1 and FNIP2. In terms of processing, phosphorylated by ULK1 and ULK2; leading to negatively regulate AMPK activity and suggesting the existence of a regulatory feedback loop between ULK1, ULK2 and AMPK. Glycosylated; O-GlcNAcylated by OGT, promoting the AMP-activated protein kinase (AMPK) activity.

AMP/ATP-binding subunit of AMP-activated protein kinase (AMPK), an energy sensor protein kinase that plays a key role in regulating cellular energy metabolism. In response to reduction of intracellular ATP levels, AMPK activates energy-producing pathways and inhibits energy-consuming processes: inhibits protein, carbohydrate and lipid biosynthesis, as well as cell growth and proliferation. AMPK acts via direct phosphorylation of metabolic enzymes, and by longer-term effects via phosphorylation of transcription regulators. Also acts as a regulator of cellular polarity by remodeling the actin cytoskeleton; probably by indirectly activating myosin. Gamma non-catalytic subunit mediates binding to AMP, ADP and ATP, leading to activate or inhibit AMPK: AMP-binding results in allosteric activation of alpha catalytic subunit (PRKAA1 or PRKAA2) both by inducing phosphorylation and preventing dephosphorylation of catalytic subunits. ADP also stimulates phosphorylation, without stimulating already phosphorylated catalytic subunit. ATP promotes dephosphorylation of catalytic subunit, rendering the AMPK enzyme inactive. The chain is 5'-AMP-activated protein kinase subunit gamma-1 (PRKAG1) from Bos taurus (Bovine).